Consider the following 320-residue polypeptide: Zinc transporter ZitB (320 aa).

Transmembrane regions (helical) follow at residues 16 to 36 (LLAA…GGLL), 43 to 63 (LADA…LVAV), 85 to 105 (AAFV…WEAI), 117 to 137 (VPML…FWLL), 153 to 173 (LHVL…IIIL), and 180 to 200 (IDPI…WALL).

It belongs to the cation diffusion facilitator (CDF) transporter (TC 2.A.4) family. SLC30A subfamily.

The protein resides in the cell inner membrane. In terms of biological role, involved in zinc efflux across the cytoplasmic membrane, thus reducing zinc accumulation in the cytoplasm and rendering bacteria more resistant to zinc. It may contribute to zinc homeostasis at low concentrations of zinc. The protein is Zinc transporter ZitB of Pectobacterium atrosepticum (strain SCRI 1043 / ATCC BAA-672) (Erwinia carotovora subsp. atroseptica).